The chain runs to 389 residues: GDSL esterase/lipase At5g14450 (389 aa).

An N-terminal signal peptide occupies residues 1 to 30; that stretch reads MKDNLERAKLMVSSTVFSWLLLCLFAVTTS. Catalysis depends on Ser-48, which acts as the Nucleophile. N-linked (GlcNAc...) asparagine glycans are attached at residues Asn-125 and Asn-335. Residues Asp-354 and His-357 contribute to the active site.

It belongs to the 'GDSL' lipolytic enzyme family.

Its subcellular location is the secreted. The chain is GDSL esterase/lipase At5g14450 from Arabidopsis thaliana (Mouse-ear cress).